A 288-amino-acid polypeptide reads, in one-letter code: ATP synthase gamma chain (288 aa).

Belongs to the ATPase gamma chain family. F-type ATPases have 2 components, CF(1) - the catalytic core - and CF(0) - the membrane proton channel. CF(1) has five subunits: alpha(3), beta(3), gamma(1), delta(1), epsilon(1). CF(0) has three main subunits: a, b and c.

It is found in the cell inner membrane. Produces ATP from ADP in the presence of a proton gradient across the membrane. The gamma chain is believed to be important in regulating ATPase activity and the flow of protons through the CF(0) complex. This chain is ATP synthase gamma chain, found in Vesicomyosocius okutanii subsp. Calyptogena okutanii (strain HA).